Here is a 103-residue protein sequence, read N- to C-terminus: PTS system oligo-beta-mannoside-specific EIIB component (103 aa).

The region spanning 1 to 103 (MKKILLACSS…EQALSLMVNQ (103 aa)) is the PTS EIIB type-3 domain. The Phosphocysteine intermediate role is filled by C8. C8 carries the phosphocysteine; by EIIA modification.

It localises to the cytoplasm. The enzyme catalyses D-cellobiose(out) + N(pros)-phospho-L-histidyl-[protein] = 6-phospho-beta-D-glucosyl-(1-&gt;4)-D-glucose(in) + L-histidyl-[protein]. The phosphoenolpyruvate-dependent sugar phosphotransferase system (sugar PTS), a major carbohydrate active transport system, catalyzes the phosphorylation of incoming sugar substrates concomitantly with their translocation across the cell membrane. The enzyme II GmuABC PTS system is involved in the transport of oligo-glucomannans such as cellobiose or mannobiose. This chain is PTS system oligo-beta-mannoside-specific EIIB component, found in Bacillus subtilis (strain 168).